We begin with the raw amino-acid sequence, 220 residues long: Adenylate kinase (220 aa).

Position 10–15 (10–15) interacts with ATP; the sequence is GAGKGT. The tract at residues 30-59 is NMP; sequence STGDMLRAAVKAGTPLGVEAKGYMDAGKLV. AMP-binding positions include threonine 31, arginine 36, 57 to 59, 85 to 88, and glutamine 92; these read KLV and GFPR. Positions 122–159 are LID; it reads GRRTHPASGRTYHVKFNPPKVEGHDDVTGEPLIQRDDD. Residues arginine 123 and 132–133 each bind ATP; that span reads TY. Arginine 156 and arginine 167 together coordinate AMP. ATP is bound at residue glycine 206.

Belongs to the adenylate kinase family. Monomer.

The protein resides in the cytoplasm. The catalysed reaction is AMP + ATP = 2 ADP. Its pathway is purine metabolism; AMP biosynthesis via salvage pathway; AMP from ADP: step 1/1. Functionally, catalyzes the reversible transfer of the terminal phosphate group between ATP and AMP. Plays an important role in cellular energy homeostasis and in adenine nucleotide metabolism. This Burkholderia cenocepacia (strain HI2424) protein is Adenylate kinase.